An 883-amino-acid chain; its full sequence is Aldehyde-alcohol dehydrogenase (883 aa).

The segment at 13 to 456 (KLVAEKHVDE…DNVSAINLLN (444 aa)) is aldehyde dehydrogenase. NAD(+) is bound by residues 121 to 126 (ITPTTN), Gly-206, and Gly-224. Residue Cys-257 is the Nucleophile of the active site. Residues Glu-355, Leu-435, and 438 to 443 (GSYGRN) contribute to the NAD(+) site. Positions 457–464 (IKKVGRRR) are linker. NAD(+) is bound by residues Asp-500, Asp-534, 561–565 (GSPMD), 612–613 (TT), Val-625, Lys-634, and Leu-653. 4 residues coordinate Fe cation: Asp-668, His-672, His-736, and His-750.

This sequence in the N-terminal section; belongs to the aldehyde dehydrogenase family. In the C-terminal section; belongs to the iron-containing alcohol dehydrogenase family. It depends on Fe(2+) as a cofactor.

The catalysed reaction is ethanol + NAD(+) = acetaldehyde + NADH + H(+). The enzyme catalyses an aldehyde + NAD(+) + H2O = a carboxylate + NADH + 2 H(+). Its function is as follows. Has alcohol dehydrogenase activity. Has aldehyde dehydrogenase activity. May play a role in enhancing virulence in mice. May be considered a potential virulence factor. This is Aldehyde-alcohol dehydrogenase from Streptococcus pneumoniae serotype 4 (strain ATCC BAA-334 / TIGR4).